Here is a 218-residue protein sequence, read N- to C-terminus: 3-dehydroquinate dehydratase (218 aa).

3-dehydroquinate contacts are provided by residues 29–31 (EFR) and Arg56. His116 functions as the Proton donor/acceptor in the catalytic mechanism. The Schiff-base intermediate with substrate role is filled by Lys142. 3 residues coordinate 3-dehydroquinate: Arg180, Ser200, and Gln204.

The protein belongs to the type-I 3-dehydroquinase family. Homodimer.

It catalyses the reaction 3-dehydroquinate = 3-dehydroshikimate + H2O. Its pathway is metabolic intermediate biosynthesis; chorismate biosynthesis; chorismate from D-erythrose 4-phosphate and phosphoenolpyruvate: step 3/7. Its function is as follows. Involved in the third step of the chorismate pathway, which leads to the biosynthesis of aromatic amino acids. Catalyzes the cis-dehydration of 3-dehydroquinate (DHQ) and introduces the first double bond of the aromatic ring to yield 3-dehydroshikimate. This chain is 3-dehydroquinate dehydratase, found in Methanococcus maripaludis (strain C6 / ATCC BAA-1332).